A 242-amino-acid chain; its full sequence is ATP synthase subunit a (242 aa).

Transmembrane regions (helical) follow at residues 29 to 49, 84 to 104, 114 to 134, 140 to 160, 189 to 209, and 210 to 230; these read SAAY…LAFS, FVPV…FGMI, IIIT…VGFV, FLSL…MIII, VIAS…IPLM, and VILI…FTIL.

The protein belongs to the ATPase A chain family. F-type ATPases have 2 components, CF(1) - the catalytic core - and CF(0) - the membrane proton channel. CF(1) has five subunits: alpha(3), beta(3), gamma(1), delta(1), epsilon(1). CF(0) has three main subunits: a(1), b(2) and c(9-12). The alpha and beta chains form an alternating ring which encloses part of the gamma chain. CF(1) is attached to CF(0) by a central stalk formed by the gamma and epsilon chains, while a peripheral stalk is formed by the delta and b chains.

Its subcellular location is the cell inner membrane. Key component of the proton channel; it plays a direct role in the translocation of protons across the membrane. The polypeptide is ATP synthase subunit a (Rickettsia bellii (strain OSU 85-389)).